A 57-amino-acid chain; its full sequence is Andropin (57 aa).

An N-terminal signal peptide occupies residues 1 to 23 (MKYFVVLVVLALILAITVGPSDA).

The protein belongs to the andropin family. As to expression, ejaculatory duct of adult males.

Its subcellular location is the secreted. In terms of biological role, male-specific peptide with moderate activity against Gram-positive bacteria. The polypeptide is Andropin (Anp) (Drosophila mauritiana (Fruit fly)).